The chain runs to 373 residues: Galactoside alpha-(1,2)-fucosyltransferase 1 (373 aa).

At 1 to 12 (MWPPSRRQLCLA) the chain is on the cytoplasmic side. The helical; Signal-anchor for type II membrane protein transmembrane segment at 13–29 (FLLVCALSAFSFLLHLH) threads the bilayer. Over 30 to 373 (QDLFRNGLAL…GSWRPWRFLG (344 aa)) the chain is Lumenal. N66, N301, and N327 each carry an N-linked (GlcNAc...) asparagine glycan.

Belongs to the glycosyltransferase 11 family. In terms of tissue distribution, brain.

It localises to the golgi apparatus. The protein resides in the golgi stack membrane. It carries out the reaction a beta-D-galactosyl-(1-&gt;4)-N-acetyl-beta-D-glucosaminyl derivative + GDP-beta-L-fucose = an alpha-L-Fuc-(1-&gt;2)-beta-D-Gal-(1-&gt;4)-beta-D-GlcNAc derivative + GDP + H(+). It catalyses the reaction a ganglioside GA1 + GDP-beta-L-fucose = a ganglioside Fuc-GA1 + GDP + H(+). The enzyme catalyses a beta-D-Gal-(1-&gt;3)-beta-D-GlcNAc-(1-&gt;3)-beta-D-Gal-(1-&gt;4)-beta-D-Glc-(1&lt;-&gt;1')-Cer(d18:1(4E)) + GDP-beta-L-fucose = alpha-L-fucosyl-(1-&gt;2)- beta-D-galactosyl-(1-&gt;3)-N-acetyl-beta-D-glucosaminyl-(1-&gt;3)-beta-D-galactosyl-(1-&gt;4)-beta-D-glucosyl-(1&lt;-&gt;1')-N-acylsphing-4-enine + GDP + H(+). The catalysed reaction is a neolactoside nLc4Cer(d18:1(4E)) + GDP-beta-L-fucose = a neolactoside IV(2)-alpha-Fuc-nLc4Cer(d18:1(4E)) + GDP + H(+). It carries out the reaction a ganglioside GM1 + GDP-beta-L-fucose = a ganglioside Fuc-GM1 + GDP + H(+). It catalyses the reaction beta-D-galactosyl-(1-&gt;3)-N-acetyl-D-galactosamine + GDP-beta-L-fucose = alpha-L-fucosyl-(1-&gt;2)-beta-D-galactosyl-(1-&gt;3)-N-acetyl-D-galactosamine + GDP + H(+). Its pathway is protein modification; protein glycosylation. Its function is as follows. Catalyzes the transfer of L-fucose, from a guanosine diphosphate-beta-L-fucose, to the terminal galactose residue of glycoconjugates through an alpha(1,2) linkage leading to H antigen synthesis that is an intermediate substrate in the synthesis of ABO blood group antigens. H antigen is essential for maturation of the glomerular layer of the main olfactory bulb, in cell migration and early cell-cell contacts during tumor associated angiogenesis. Preferentially fucosylates soluble lactose and to a lesser extent fucosylates glycolipids gangliosides GA1 and GM1a. The protein is Galactoside alpha-(1,2)-fucosyltransferase 1 of Oryctolagus cuniculus (Rabbit).